Consider the following 270-residue polypeptide: tRNA pseudouridine synthase A (270 aa).

D60 (nucleophile) is an active-site residue. The interval 107–111 (FHARF) is RNA binding. Y118 provides a ligand contact to substrate. The interval 168–172 (QCQSR) is interaction with tRNA.

It belongs to the tRNA pseudouridine synthase TruA family. Homodimer.

The catalysed reaction is uridine(38/39/40) in tRNA = pseudouridine(38/39/40) in tRNA. In terms of biological role, formation of pseudouridine at positions 38, 39 and 40 in the anticodon stem and loop of transfer RNAs. The protein is tRNA pseudouridine synthase A of Shigella boydii serotype 4 (strain Sb227).